The following is a 333-amino-acid chain: Large ribosomal subunit protein mL39 (333 aa).

Residues 56-122 enclose the TGS domain; the sequence is DKIEVRYLGL…QESCTLQLLN (67 aa). A disordered region spans residues 311–333; sequence SKKPSPARLPNEPFEEQQQLQLS.

It belongs to the mitochondrion-specific ribosomal protein mL39 family. Component of the mitochondrial ribosome large subunit (39S) which comprises a 16S rRNA and about 50 distinct proteins.

The protein resides in the mitochondrion. This chain is Large ribosomal subunit protein mL39 (mRpL39), found in Drosophila melanogaster (Fruit fly).